The following is a 740-amino-acid chain: Eukaryotic translation initiation factor 3 subunit B (740 aa).

The span at 1–10 (MAPSFDTLSE) shows a compositional bias: polar residues. Residues 1-20 (MAPSFDTLSEQDLHEEEEEE) are disordered. The RRM domain occupies 40 to 126 (TFVVIDGLPV…HTLLVNKLMD (87 aa)). 6 WD repeats span residues 193 to 230 (AHWTQLFVQWSPKGTYLASVHPQGVQLWGGPAFSKQKQ), 232 to 289 (PHPF…RSFV), 302 to 343 (EPKK…LLGK), 455 to 496 (SLKD…SFFA), 513 to 556 (IEKK…EKPE), and 571 to 609 (TEHYGVTDIDWDPTGRYVVSSASVWTHQLENGWNLHTFA). Residues 696–721 (AYGLPEEADDPKLAKDAAATTQEQGE) are disordered.

It belongs to the eIF-3 subunit B family. Component of the eukaryotic translation initiation factor 3 (eIF-3) complex.

Its subcellular location is the cytoplasm. RNA-binding component of the eukaryotic translation initiation factor 3 (eIF-3) complex, which is involved in protein synthesis of a specialized repertoire of mRNAs and, together with other initiation factors, stimulates binding of mRNA and methionyl-tRNAi to the 40S ribosome. The eIF-3 complex specifically targets and initiates translation of a subset of mRNAs involved in cell proliferation. The sequence is that of Eukaryotic translation initiation factor 3 subunit B (prt1) from Aspergillus fumigatus (strain ATCC MYA-4609 / CBS 101355 / FGSC A1100 / Af293) (Neosartorya fumigata).